Here is a 249-residue protein sequence, read N- to C-terminus: Probable phosphoglycerate mutase (249 aa).

Residues 9-16, 22-23, R61, 88-91, K99, 115-116, and 184-185 contribute to the substrate site; these read RHGESTWN, TG, ERMY, RR, and GN. The active-site Tele-phosphohistidine intermediate is H10. E88 (proton donor/acceptor) is an active-site residue.

Belongs to the phosphoglycerate mutase family. BPG-dependent PGAM subfamily. Homodimer.

The catalysed reaction is (2R)-2-phosphoglycerate = (2R)-3-phosphoglycerate. It catalyses the reaction (2R)-3-phospho-glyceroyl phosphate = (2R)-2,3-bisphosphoglycerate + H(+). In terms of biological role, catalyzes the interconversion of 2-phosphoglycerate and 3-phosphoglycerate. The sequence is that of Probable phosphoglycerate mutase (gpmA) from Dictyostelium discoideum (Social amoeba).